Reading from the N-terminus, the 99-residue chain is Putative pterin-4-alpha-carbinolamine dehydratase (99 aa).

The protein belongs to the pterin-4-alpha-carbinolamine dehydratase family.

It catalyses the reaction (4aS,6R)-4a-hydroxy-L-erythro-5,6,7,8-tetrahydrobiopterin = (6R)-L-erythro-6,7-dihydrobiopterin + H2O. This Bradyrhizobium sp. (strain BTAi1 / ATCC BAA-1182) protein is Putative pterin-4-alpha-carbinolamine dehydratase.